Consider the following 87-residue polypeptide: Large ribosomal subunit protein bL31B (87 aa).

This sequence belongs to the bacterial ribosomal protein bL31 family. Type B subfamily. In terms of assembly, part of the 50S ribosomal subunit.

This is Large ribosomal subunit protein bL31B from Burkholderia ambifaria (strain MC40-6).